We begin with the raw amino-acid sequence, 44 residues long: Cytochrome b559 subunit beta (44 aa).

A helical membrane pass occupies residues 17 to 41 (VRWLAVHTLAVPSVFFVGAIAAMQF). Residues arginine 18 and histidine 23 each contribute to the heme site.

This sequence belongs to the PsbE/PsbF family. As to quaternary structure, heterodimer of an alpha subunit and a beta subunit. PSII is composed of 1 copy each of membrane proteins PsbA, PsbB, PsbC, PsbD, PsbE, PsbF, PsbH, PsbI, PsbJ, PsbK, PsbL, PsbM, PsbT, PsbX, PsbY, PsbZ, Psb30/Ycf12, peripheral proteins PsbO, CyanoQ (PsbQ), PsbU, PsbV and a large number of cofactors. It forms dimeric complexes. Heme b is required as a cofactor.

The protein resides in the cellular thylakoid membrane. This b-type cytochrome is tightly associated with the reaction center of photosystem II (PSII). PSII is a light-driven water:plastoquinone oxidoreductase that uses light energy to abstract electrons from H(2)O, generating O(2) and a proton gradient subsequently used for ATP formation. It consists of a core antenna complex that captures photons, and an electron transfer chain that converts photonic excitation into a charge separation. This Synechocystis sp. (strain ATCC 27184 / PCC 6803 / Kazusa) protein is Cytochrome b559 subunit beta.